An 83-amino-acid chain; its full sequence is Cytochrome c oxidase subunit 7A2, mitochondrial (83 aa).

The transit peptide at 1 to 23 directs the protein to the mitochondrion; that stretch reads MLRNLLALRQIAQRTISTTSRRH. The Mitochondrial matrix portion of the chain corresponds to 24-48; that stretch reads FENKVPEKQKLFQEDNGMPVHLKGG. Lysine 33 bears the N6-acetyllysine mark. A helical transmembrane segment spans residues 49-77; that stretch reads ASDALLYRATMALTLGGTAYAIYLLAMAA. Over 78 to 83 the chain is Mitochondrial intermembrane; sequence FPKKQN.

The protein belongs to the cytochrome c oxidase VIIa family. As to quaternary structure, component of the cytochrome c oxidase (complex IV, CIV), a multisubunit enzyme composed of 14 subunits. The complex is composed of a catalytic core of 3 subunits MT-CO1, MT-CO2 and MT-CO3, encoded in the mitochondrial DNA, and 11 supernumerary subunits COX4I, COX5A, COX5B, COX6A, COX6B, COX6C, COX7A, COX7B, COX7C, COX8 and NDUFA4, which are encoded in the nuclear genome. The complex exists as a monomer or a dimer and forms supercomplexes (SCs) in the inner mitochondrial membrane with NADH-ubiquinone oxidoreductase (complex I, CI) and ubiquinol-cytochrome c oxidoreductase (cytochrome b-c1 complex, complex III, CIII), resulting in different assemblies (supercomplex SCI(1)III(2)IV(1) and megacomplex MCI(2)III(2)IV(2)). Interacts with PET100.

Its subcellular location is the mitochondrion inner membrane. It functions in the pathway energy metabolism; oxidative phosphorylation. In terms of biological role, component of the cytochrome c oxidase, the last enzyme in the mitochondrial electron transport chain which drives oxidative phosphorylation. The respiratory chain contains 3 multisubunit complexes succinate dehydrogenase (complex II, CII), ubiquinol-cytochrome c oxidoreductase (cytochrome b-c1 complex, complex III, CIII) and cytochrome c oxidase (complex IV, CIV), that cooperate to transfer electrons derived from NADH and succinate to molecular oxygen, creating an electrochemical gradient over the inner membrane that drives transmembrane transport and the ATP synthase. Cytochrome c oxidase is the component of the respiratory chain that catalyzes the reduction of oxygen to water. Electrons originating from reduced cytochrome c in the intermembrane space (IMS) are transferred via the dinuclear copper A center (CU(A)) of subunit 2 and heme A of subunit 1 to the active site in subunit 1, a binuclear center (BNC) formed by heme A3 and copper B (CU(B)). The BNC reduces molecular oxygen to 2 water molecules using 4 electrons from cytochrome c in the IMS and 4 protons from the mitochondrial matrix. This chain is Cytochrome c oxidase subunit 7A2, mitochondrial (Cox7a2), found in Mus musculus (Mouse).